Reading from the N-terminus, the 193-residue chain is Holliday junction branch migration complex subunit RuvA (193 aa).

The interval 1–64 (MIGRIAGVLL…EDAHLLYGFG (64 aa)) is domain I. Positions 65-139 (TAEERSTFRE…GKIGADLGAM (75 aa)) are domain II. The flexible linker stretch occupies residues 139–143 (MAGAA). The tract at residues 144 to 193 (SASDHASDILNALLALGYSEKEALTAVKNVPAGTGVSEGIKLALKALSKG) is domain III.

The protein belongs to the RuvA family. Homotetramer. Forms an RuvA(8)-RuvB(12)-Holliday junction (HJ) complex. HJ DNA is sandwiched between 2 RuvA tetramers; dsDNA enters through RuvA and exits via RuvB. An RuvB hexamer assembles on each DNA strand where it exits the tetramer. Each RuvB hexamer is contacted by two RuvA subunits (via domain III) on 2 adjacent RuvB subunits; this complex drives branch migration. In the full resolvosome a probable DNA-RuvA(4)-RuvB(12)-RuvC(2) complex forms which resolves the HJ.

Its subcellular location is the cytoplasm. Its function is as follows. The RuvA-RuvB-RuvC complex processes Holliday junction (HJ) DNA during genetic recombination and DNA repair, while the RuvA-RuvB complex plays an important role in the rescue of blocked DNA replication forks via replication fork reversal (RFR). RuvA specifically binds to HJ cruciform DNA, conferring on it an open structure. The RuvB hexamer acts as an ATP-dependent pump, pulling dsDNA into and through the RuvAB complex. HJ branch migration allows RuvC to scan DNA until it finds its consensus sequence, where it cleaves and resolves the cruciform DNA. In Paraburkholderia phytofirmans (strain DSM 17436 / LMG 22146 / PsJN) (Burkholderia phytofirmans), this protein is Holliday junction branch migration complex subunit RuvA.